An 88-amino-acid polypeptide reads, in one-letter code: Large ribosomal subunit protein bL27 (88 aa).

A disordered region spans residues 1-23 (MAHKKGTGSTRNGRDSNSKRLGV).

The protein belongs to the bacterial ribosomal protein bL27 family.

The sequence is that of Large ribosomal subunit protein bL27 from Synechococcus sp. (strain CC9902).